Here is a 166-residue protein sequence, read N- to C-terminus: Peptidoglycan-associated lipoprotein (166 aa).

A signal peptide spans M1–G21. The N-palmitoyl cysteine moiety is linked to residue C22. The S-diacylglycerol cysteine moiety is linked to residue C22. The region spanning S54–K166 is the OmpA-like domain. The disordered stretch occupies residues V147–K166.

It belongs to the Pal lipoprotein family. In terms of assembly, the Tol-Pal system is composed of five core proteins: the inner membrane proteins TolA, TolQ and TolR, the periplasmic protein TolB and the outer membrane protein Pal. They form a network linking the inner and outer membranes and the peptidoglycan layer.

It localises to the cell outer membrane. Its function is as follows. Part of the Tol-Pal system, which plays a role in outer membrane invagination during cell division and is important for maintaining outer membrane integrity. The polypeptide is Peptidoglycan-associated lipoprotein (Pseudomonas putida (Arthrobacter siderocapsulatus)).